Reading from the N-terminus, the 558-residue chain is CTP synthase (558 aa).

The segment at 1–267 is amidoligase domain; it reads MTKFVFVTGG…AQQTLELLNL (267 aa). Ser-13 is a binding site for CTP. Ser-13 is a UTP binding site. ATP-binding positions include 14–19 and Asp-71; that span reads SIGKGI. Mg(2+)-binding residues include Asp-71 and Glu-141. CTP contacts are provided by residues 148-150, 188-193, and Lys-224; these read DIE and KTKPTQ. Residues 188-193 and Lys-224 contribute to the UTP site; that span reads KTKPTQ. Residues 292 to 534 form the Glutamine amidotransferase type-1 domain; the sequence is EVALVGKYVQ…VKASVDYNHV (243 aa). Gly-354 contributes to the L-glutamine binding site. Cys-381 (nucleophile; for glutamine hydrolysis) is an active-site residue. L-glutamine-binding positions include 382–385, Glu-405, and Arg-462; that span reads MGMQ. Residues His-507 and Glu-509 contribute to the active site.

Belongs to the CTP synthase family. In terms of assembly, homotetramer.

It catalyses the reaction UTP + L-glutamine + ATP + H2O = CTP + L-glutamate + ADP + phosphate + 2 H(+). The catalysed reaction is L-glutamine + H2O = L-glutamate + NH4(+). The enzyme catalyses UTP + NH4(+) + ATP = CTP + ADP + phosphate + 2 H(+). The protein operates within pyrimidine metabolism; CTP biosynthesis via de novo pathway; CTP from UDP: step 2/2. With respect to regulation, allosterically activated by GTP, when glutamine is the substrate; GTP has no effect on the reaction when ammonia is the substrate. The allosteric effector GTP functions by stabilizing the protein conformation that binds the tetrahedral intermediate(s) formed during glutamine hydrolysis. Inhibited by the product CTP, via allosteric rather than competitive inhibition. Its function is as follows. Catalyzes the ATP-dependent amination of UTP to CTP with either L-glutamine or ammonia as the source of nitrogen. Regulates intracellular CTP levels through interactions with the four ribonucleotide triphosphates. In Gloeothece citriformis (strain PCC 7424) (Cyanothece sp. (strain PCC 7424)), this protein is CTP synthase.